A 239-amino-acid chain; its full sequence is Short palate, lung and nasal epithelium carcinoma-associated protein 2A (239 aa).

The first 20 residues, 1-20 (MVQLWKLVLLCGLLAGTSES), serve as a signal peptide directing secretion. Cysteines 166 and 209 form a disulfide.

It belongs to the BPI/LBP/Plunc superfamily. Plunc family. Detected in salivary tissues: parotid, submandibular and sublingual glands.

It is found in the secreted. The polypeptide is Short palate, lung and nasal epithelium carcinoma-associated protein 2A (SPLUNC2A) (Bos taurus (Bovine)).